The primary structure comprises 135 residues: UPF0355 protein SE_2351 (135 aa).

It belongs to the UPF0355 family.

This Staphylococcus epidermidis (strain ATCC 12228 / FDA PCI 1200) protein is UPF0355 protein SE_2351.